A 331-amino-acid chain; its full sequence is Induced myeloid leukemia cell differentiation protein Mcl-1 homolog (331 aa).

A PEST-like region spans residues 85 to 156 (LAVPPEEMAA…PPEEEEDDLY (72 aa)). The residue at position 102 (serine 102) is a Phosphoserine. Residue lysine 117 forms a Glycyl lysine isopeptide (Lys-Gly) (interchain with G-Cter in ubiquitin) linkage. Residues 130–154 (EAAKSSGADGSLPSTPPPPEEEEDD) are disordered. A Phosphoserine; by GSK3-alpha and GSK3-beta modification is found at serine 140. Serine 143 carries the phosphoserine modification. Position 144 is a phosphothreonine; by MAPK (threonine 144). Glycyl lysine isopeptide (Lys-Gly) (interchain with G-Cter in ubiquitin) cross-links involve residues lysine 175 and lysine 178. A BH3 motif is present at residues 190 to 204 (ALETLRRVGDGVQRN). The short motif at 234–253 (VFKDGVTNWGRIVTLISFGA) is the BH1 element. The BH2 motif lies at 285-300 (DWLVKQRGWDGFVEFF). A helical membrane pass occupies residues 308–330 (GIRNVLLAFAGVAGVGAGLAYLI).

It belongs to the Bcl-2 family. As to quaternary structure, interacts with HIF3A isoform 2 (via C-terminus domain). Interacts with BAD, BOK, BIK, BAX, BAK1, and TPT1. Interacts with BBC3, BMF and PMAIP1. Interacts with BOP. Interacts with BCL2L11; this interaction may sequester BCL2L11 and prevent its pro-apoptotic activity. Interacts with GIMAP5 and HSPA8/HSC70; the interaction between HSPA8 and MCL1 is impaired in the absence of GIMAP5. In terms of processing, cleaved by CASP3 during apoptosis, yielding a pro-apoptotic C-terminal fragment. Rapidly degraded in the absence of phosphorylation in the PEST region. Post-translationally, phosphorylated on Ser-140, by GSK3, in response to IL3/interleukin-3 withdrawal. Phosphorylation at Ser-140 induces ubiquitination and proteasomal degradation, abrogating the anti-apoptotic activity. Treatment with taxol or okadaic acid induces phosphorylation on additional sites. In terms of processing, ubiquitinated. Ubiquitination is induced by phosphorylation at Ser-140. Deubiquitinated by USP20; leading to increased stability.

It is found in the membrane. The protein resides in the cytoplasm. It localises to the mitochondrion. Its subcellular location is the nucleus. The protein localises to the nucleoplasm. Involved in the regulation of apoptosis versus cell survival, and in the maintenance of viability but not of proliferation. Mediates its effects by interactions with a number of other regulators of apoptosis. Isoform 2 has antiapoptotic activity. The sequence is that of Induced myeloid leukemia cell differentiation protein Mcl-1 homolog (Mcl1) from Mus musculus (Mouse).